The primary structure comprises 438 residues: Coenzyme A disulfide reductase (438 aa).

8–33 (GAVAGGATCASQIRRLDKESDIIIFE) serves as a coordination point for FAD. Positions 15, 19, 22, 39, and 42 each coordinate substrate. Cys-43 functions as the Nucleophile in the catalytic mechanism. The active-site Redox-active is Cys-43. Residue Lys-71 participates in substrate binding. 151–166 (VLVVGAGYVSLEVLEN) contributes to the NADP(+) binding site. Position 267-277 (267-277 (TNVPNIYAIGD)) interacts with FAD. His-299 lines the substrate pocket. Tyr-419 is an FAD binding site. Lys-427 contributes to the substrate binding site.

The protein belongs to the class-III pyridine nucleotide-disulfide oxidoreductase family. In terms of assembly, homodimer. FAD serves as cofactor.

The enzyme catalyses NADP(+) + 2 CoA = CoA-disulfide + NADPH + H(+). Functionally, catalyzes specifically the NADPH-dependent reduction of coenzyme A disulfide. Is also active with other disulfide substrates containing at least one 4'-phosphopantethienyl moiety such as 4,4'-diphosphopantethine, but is not able to reduce oxidized glutathione, cystine, pantethine, or H(2)O(2). This Staphylococcus aureus (strain NCTC 8325 / PS 47) protein is Coenzyme A disulfide reductase (cdr).